Consider the following 601-residue polypeptide: Probable HECT-type ubiquitin ligase-interacting protein creD (601 aa).

2 disordered regions span residues 374-397 and 455-489; these read EVDPSGYRTPGPGSGPGTPFGTLS and SADYFGPSSGSNSHSPASPELSRRPSDEGYHDHDH. Positions 461–473 are enriched in low complexity; sequence PSSGSNSHSPASP. Residues 475–489 show a composition bias toward basic and acidic residues; that stretch reads LSRRPSDEGYHDHDH.

It belongs to the arrestin family. In terms of assembly, interacts with hulA.

Its function is as follows. Component of the regulatory network controlling carbon source utilization through ubiquitination and deubiquitination involving creA, creB, creC, creD and acrB. May be involved in signaling by recognizing appropriately phosphorylated substrates via its arrestin domains and then recruit a HECT-type ubiquitin ligase such as hulA, leading to ubiquitination of the substrate, providing a link between ubiquitination and phosphorylation in protein regulation and stability. This is Probable HECT-type ubiquitin ligase-interacting protein creD (creD) from Neosartorya fischeri (strain ATCC 1020 / DSM 3700 / CBS 544.65 / FGSC A1164 / JCM 1740 / NRRL 181 / WB 181) (Aspergillus fischerianus).